Consider the following 345-residue polypeptide: Phosphoribosylformylglycinamidine cyclo-ligase (345 aa).

It belongs to the AIR synthase family.

It localises to the cytoplasm. The enzyme catalyses 2-formamido-N(1)-(5-O-phospho-beta-D-ribosyl)acetamidine + ATP = 5-amino-1-(5-phospho-beta-D-ribosyl)imidazole + ADP + phosphate + H(+). The protein operates within purine metabolism; IMP biosynthesis via de novo pathway; 5-amino-1-(5-phospho-D-ribosyl)imidazole from N(2)-formyl-N(1)-(5-phospho-D-ribosyl)glycinamide: step 2/2. In Limosilactobacillus fermentum (strain NBRC 3956 / LMG 18251) (Lactobacillus fermentum), this protein is Phosphoribosylformylglycinamidine cyclo-ligase.